The primary structure comprises 921 residues: GPI ethanolamine phosphate transferase 1 (921 aa).

A helical transmembrane segment spans residues 37-57 (PGHVALIAGLYEDVSAVTTGW). Residues N69 and N132 are each glycosylated (N-linked (GlcNAc...) asparagine). 10 helical membrane passes run 386–406 (ALITIGYLGWVAYALTTVIDL), 418–438 (TLIGTIISTSALTALYASFAI), 441–461 (SPLTYYAYAFFPVFFWEEVYA), 483–503 (FVSLVFNCAVYVGIIESLALG), 509–529 (ILTILFVIGAFWPIAYGFSFL), 533–553 (MALSITWFLSCIAMSTFTLLP), 561–581 (VNMIMLGGALMVLVGIIYLIL), 606–626 (LVGIQIGLTLLAALVTRSSAL), 640–660 (VMGWVVLVVSLLMPLAYRAKP), and 679–699 (FVILTISYEGLFYIAFSAVLV). Residues 715 to 737 (SANGAARSAPSPAKPHNLETSQT) form a disordered region. The next 4 helical transmembrane spans lie at 752 to 772 (VALFFFVLFQAAFFSTGNVAS), 795 to 815 (AMLILKLLIPFALISANLGIL), 825 to 845 (ALFMVVMAISDILTLYFFWVV), and 862 to 882 (VIASLLCVFVAALEGVSAMFI).

It belongs to the PIGG/PIGN/PIGO family. PIGN subfamily.

Its subcellular location is the endoplasmic reticulum membrane. It participates in glycolipid biosynthesis; glycosylphosphatidylinositol-anchor biosynthesis. Its function is as follows. Ethanolamine phosphate transferase involved in glycosylphosphatidylinositol-anchor biosynthesis. Transfers ethanolamine phosphate to the first alpha-1,4-linked mannose of the glycosylphosphatidylinositol precursor of GPI-anchor. This Chaetomium globosum (strain ATCC 6205 / CBS 148.51 / DSM 1962 / NBRC 6347 / NRRL 1970) (Soil fungus) protein is GPI ethanolamine phosphate transferase 1 (MCD4).